The following is a 173-amino-acid chain: uncharacterized protein (173 aa).

Disordered stretches follow at residues 1–23 (MGDL…GDVA) and 48–173 (TGAA…APQR). Low complexity predominate over residues 49–60 (GAAPGSAQAGPP). Pro residues predominate over residues 70-83 (PRGPQAPPRLPPSL). Positions 123–136 (PACAGSSAPGSPAA) are enriched in low complexity.

This is an uncharacterized protein from Homo sapiens (Human).